Here is a 288-residue protein sequence, read N- to C-terminus: MLVNFKLMLQKAKLGKYAIPHININNYEWAKAVLTAANQANSPIIVSVSEGALKYMSGYSVVIPLVKGLIESLSVKVPVTLHLDHGSYDACIQALQAGFSSVMFDGSHLPFEENFNKSKKLIEIAQKTNASVELEVGTIGGEEDGVIGQGELANVDECKQIASLKPDALAAGIGNIHGIYPKNWKGLNFPLIETISKITNLPLVLHGGSGILENDVKKAISLGICKLNINTECQLAFAHEIRKYIESNKDLDLNKKGYDPRKLLKEPTQAIVDTCLEKIDLCGSRNKA.

Residue Ser-49 participates in D-glyceraldehyde 3-phosphate binding. Asp-84 (proton donor) is an active-site residue. His-85, Asp-105, Glu-135, and His-177 together coordinate Zn(2+). Position 178 (Gly-178) interacts with dihydroxyacetone phosphate. Position 206 (His-206) interacts with Zn(2+). Dihydroxyacetone phosphate contacts are provided by residues 207–209 and 228–231; these read GGS and NINT.

The protein belongs to the class II fructose-bisphosphate aldolase family. Homodimer. Requires Zn(2+) as cofactor.

The enzyme catalyses beta-D-fructose 1,6-bisphosphate = D-glyceraldehyde 3-phosphate + dihydroxyacetone phosphate. It participates in carbohydrate degradation; glycolysis; D-glyceraldehyde 3-phosphate and glycerone phosphate from D-glucose: step 4/4. Functionally, catalyzes the aldol condensation of dihydroxyacetone phosphate (DHAP or glycerone-phosphate) with glyceraldehyde 3-phosphate (G3P) to form fructose 1,6-bisphosphate (FBP) in gluconeogenesis and the reverse reaction in glycolysis. This chain is Fructose-bisphosphate aldolase (fba), found in Mycoplasma genitalium (strain ATCC 33530 / DSM 19775 / NCTC 10195 / G37) (Mycoplasmoides genitalium).